The primary structure comprises 620 residues: Glutathione-regulated potassium-efflux system protein KefC (620 aa).

The next 12 membrane-spanning stretches (helical) occupy residues 4–24 (HTLI…PIAV), 26–46 (LGLG…PWGL), 54–74 (SILH…GLEL), 90–110 (GALQ…LLGL), 114–134 (VAEL…MQAM), 149–169 (FAVL…IPLL), 178–198 (MGAF…VVLL), 218–238 (VFSA…EEVG), 270–290 (GLLL…GTLL), 294–314 (LRIV…LWLI), 327–347 (WFAV…GAAQ), and 359–379 (SLTL…VILN). An RCK N-terminal domain is found at 399–518 (QPRVIIAGFG…AGVEKPERET (120 aa)). Residues 597–620 (GWQGTEEGKHTGNMADEPETKPSS) form a disordered region.

It belongs to the monovalent cation:proton antiporter 2 (CPA2) transporter (TC 2.A.37) family. KefC subfamily. Homodimer. Interacts with the regulatory subunit KefF.

The protein localises to the cell inner membrane. In terms of biological role, pore-forming subunit of a potassium efflux system that confers protection against electrophiles. Catalyzes K(+)/H(+) antiport. The protein is Glutathione-regulated potassium-efflux system protein KefC of Escherichia coli O7:K1 (strain IAI39 / ExPEC).